Reading from the N-terminus, the 1470-residue chain is Roundabout homolog 2 (1470 aa).

Residues 1-21 (MNPLMFTLLLLFGFLCIQIDG) form the signal peptide. Residues 22–863 (SRLRQEDFPP…EQITDVVKQP (842 aa)) lie on the Extracellular side of the membrane. 5 consecutive Ig-like C2-type domains span residues 31–127 (PRIV…ASLE), 133–220 (DDFR…AELT), 225–309 (PTFL…ATLT), 318–413 (PQFV…LEVT), and 422–508 (PIIL…AVLD). Cysteines 52 and 110 form a disulfide. N-linked (GlcNAc...) asparagine glycosylation is present at asparagine 123. 3 disulfides stabilise this stretch: cysteine 154–cysteine 203, cysteine 246–cysteine 293, and cysteine 339–cysteine 395. N-linked (GlcNAc...) asparagine glycosylation is present at asparagine 430. Residues cysteine 443 and cysteine 492 are joined by a disulfide bond. Fibronectin type-III domains are found at residues 528–622 (PPSK…TQDI), 641–739 (VVVR…TEEA), and 743–840 (PPQS…IGGR). 4 N-linked (GlcNAc...) asparagine glycosylation sites follow: asparagine 756, asparagine 786, asparagine 793, and asparagine 849. The chain crosses the membrane as a helical span at residues 864 to 884 (AFIAGIGGACWVILMGFSIWL). The Cytoplasmic segment spans residues 885–1470 (YWRRKKRKGL…GSNSQGQFTE (586 aa)). Disordered stretches follow at residues 1036-1089 (GFGY…LPGT), 1129-1159 (EDRV…LTPS), 1190-1371 (IQSN…DCPA), and 1383-1470 (DWIN…QFTE). Positions 1144–1158 (PAISFGQQSTATLTP) are enriched in polar residues. The residue at position 1157 (threonine 1157) is a Phosphothreonine. Serine 1159 is modified (phosphoserine). Residues 1194–1203 (TPPPQPPAPP) are compositionally biased toward pro residues. Over residues 1215–1231 (LETDVPDEDADDEEEPL) the composition is skewed to acidic residues. Residues 1243–1288 (TPGSSMDNLDSSVTGKAFSSSQRQRPTSPFSTDSNTSAAQNQSQRP) are compositionally biased toward polar residues. Positions 1315-1325 (DLPPPPDPPPG) are enriched in pro residues. A compositionally biased stretch (polar residues) spans 1328 to 1343 (LRQQIGLSQHSGNVEN). Positions 1413-1437 (SKPSFPSPGGHSSSGTSSSKGSTGP) are enriched in low complexity. The span at 1461–1470 (GSNSQGQFTE) shows a compositional bias: polar residues.

Belongs to the immunoglobulin superfamily. ROBO family. As to quaternary structure, interacts with SLIT2. In terms of tissue distribution, expressed in embryonal spinal cord.

The protein localises to the membrane. Receptor for SLIT2, and probably SLIT1, which are thought to act as molecular guidance cue in cellular migration, including axonal navigation at the ventral midline of the neural tube and projection of axons to different regions during neuronal development. This Mus musculus (Mouse) protein is Roundabout homolog 2 (Robo2).